The primary structure comprises 418 residues: Glutamyl-tRNA reductase (418 aa).

Substrate is bound by residues 49-52 (TCNR), S109, 114-116 (EPQ), and Q120. The active-site Nucleophile is C50. Position 189-194 (189-194 (GAGETI)) interacts with NADP(+).

Belongs to the glutamyl-tRNA reductase family. In terms of assembly, homodimer.

It catalyses the reaction (S)-4-amino-5-oxopentanoate + tRNA(Glu) + NADP(+) = L-glutamyl-tRNA(Glu) + NADPH + H(+). It functions in the pathway porphyrin-containing compound metabolism; protoporphyrin-IX biosynthesis; 5-aminolevulinate from L-glutamyl-tRNA(Glu): step 1/2. In terms of biological role, catalyzes the NADPH-dependent reduction of glutamyl-tRNA(Glu) to glutamate 1-semialdehyde (GSA). The chain is Glutamyl-tRNA reductase from Escherichia coli O127:H6 (strain E2348/69 / EPEC).